We begin with the raw amino-acid sequence, 477 residues long: V-type proton ATPase subunit B (477 aa).

R365 lines the ATP pocket.

Belongs to the ATPase alpha/beta chains family. V-ATPase is a heteromultimeric enzyme composed of a peripheral catalytic V1 complex (components A to H) attached to an integral membrane V0 proton pore complex (components: a, c, c', c'', d, e, f and VOA1).

Its subcellular location is the vacuole membrane. In terms of biological role, non-catalytic subunit of the V1 complex of vacuolar(H+)-ATPase (V-ATPase), a multisubunit enzyme composed of a peripheral complex (V1) that hydrolyzes ATP and a membrane integral complex (V0) that translocates protons. V-ATPase is responsible for acidifying and maintaining the pH of intracellular compartments. The polypeptide is V-type proton ATPase subunit B (Encephalitozoon cuniculi (strain GB-M1) (Microsporidian parasite)).